Consider the following 466-residue polypeptide: Argininosuccinate lyase (466 aa).

The protein belongs to the lyase 1 family. Argininosuccinate lyase subfamily.

It is found in the cytoplasm. The catalysed reaction is 2-(N(omega)-L-arginino)succinate = fumarate + L-arginine. It participates in amino-acid biosynthesis; L-arginine biosynthesis; L-arginine from L-ornithine and carbamoyl phosphate: step 3/3. This chain is Argininosuccinate lyase, found in Ehrlichia ruminantium (strain Gardel).